A 321-amino-acid polypeptide reads, in one-letter code: Ribose import permease protein RbsC (321 aa).

Over 1 to 22 (MTTQTVSGRRYFTKAWLMEQKS) the chain is Cytoplasmic. The chain crosses the membrane as a helical span at residues 23 to 43 (LIALLVLIAIVSTLSPNFFTI). The Periplasmic portion of the chain corresponds to 44 to 56 (NNLFNILQQTSVN). Residues 57–77 (AIMAVGMTLVILTSGIDLSVG) form a helical membrane-spanning segment. Over 78–125 (SLLALTGAVAASIVGIEVNALVAVAAALALGAAIGAVTGVIVAKGRVQ) the chain is Cytoplasmic. Residues 126–145 (AFIATLVMMLLLRGVTMVYT) form a helical membrane-spanning segment. Topologically, residues 146-168 (NGSPVNTGFTENADLFGWFGIGR) are periplasmic. Residues 169-190 (PLGVPTPVWIMGIVFLAAWYML) form a helical membrane-spanning segment. The Cytoplasmic portion of the chain corresponds to 191–220 (HHTRLGRYIYALGGNEAATRLSGINVNKIK). The chain crosses the membrane as a helical span at residues 221–240 (IIVYSLCGLLASLAGIIEVA). Over 241–294 (RLSSAQPTAGTGYELDAIAAVVLGGTSLAGGKGRIVGTLIGALILGFLNNGLNL) the chain is Periplasmic. Residues 295–316 (LGVSSYYQMIVKAVVILLAVLV) traverse the membrane as a helical segment. Residues 317–321 (DNKKQ) are Cytoplasmic-facing.

Belongs to the binding-protein-dependent transport system permease family. AraH/RbsC subfamily. As to quaternary structure, the complex is composed of an ATP-binding protein (RbsA), two transmembrane proteins (RbsC) and a solute-binding protein (RbsB).

The protein resides in the cell inner membrane. Its function is as follows. Part of the ABC transporter complex RbsABC involved in ribose import. Probably responsible for the translocation of the substrate across the membrane. The chain is Ribose import permease protein RbsC (rbsC) from Escherichia coli O157:H7.